A 468-amino-acid polypeptide reads, in one-letter code: Aspartate ammonia-lyase (468 aa).

Threonine 101, serine 140, threonine 141, asparagine 142, threonine 187, and histidine 188 together coordinate L-aspartate. Residues 317 to 326 (GSSIMPGKVN) form an SS loop region. Serine 318 serves as the catalytic Proton acceptor. The L-aspartate site is built by serine 319 and lysine 324.

This sequence belongs to the class-II fumarase/aspartase family. Aspartase subfamily. As to quaternary structure, homotetramer.

It carries out the reaction L-aspartate = fumarate + NH4(+). Unlike E.coli aspartase, the enzyme is not activated by the presence of divalent metal ions at alkaline pH. Its function is as follows. Catalyzes the reversible conversion of L-aspartate to fumarate and ammonia. Is highly specific for L-aspartate in the deamination reaction, and cannot use alternative substrates such as D-aspartic acid, alpha-methyl-DL-aspartic acid, beta-methyl-DL-aspartic acid or L-glutamate. In the reverse reaction, alternative nucleophiles (such as hydroxylamine, hydrazine, methoxylamine and methylamine) can replace ammonia in vitro, leading to the formation of N-substituted aspartic acid derivatives. This is Aspartate ammonia-lyase from Bacillus sp.